The primary structure comprises 210 residues: Large ribosomal subunit protein uL3 (210 aa).

Residues 125-151 are disordered; that stretch reads RHGQSRGPMSHGSRYHRRPGSMGPVAP.

The protein belongs to the universal ribosomal protein uL3 family. Part of the 50S ribosomal subunit. Forms a cluster with proteins L14 and L19.

One of the primary rRNA binding proteins, it binds directly near the 3'-end of the 23S rRNA, where it nucleates assembly of the 50S subunit. The sequence is that of Large ribosomal subunit protein uL3 from Bacillus mycoides (strain KBAB4) (Bacillus weihenstephanensis).